Here is a 70-residue protein sequence, read N- to C-terminus: Large ribosomal subunit protein bL31 (70 aa).

Zn(2+)-binding residues include cysteine 16, cysteine 18, cysteine 37, and cysteine 40.

This sequence belongs to the bacterial ribosomal protein bL31 family. Type A subfamily. Part of the 50S ribosomal subunit. The cofactor is Zn(2+).

Functionally, binds the 23S rRNA. This Shewanella baltica (strain OS223) protein is Large ribosomal subunit protein bL31.